The chain runs to 259 residues: Thiazole synthase (259 aa).

The Schiff-base intermediate with DXP role is filled by Lys95. 1-deoxy-D-xylulose 5-phosphate is bound by residues Gly156, 183–184 (AG), and 205–206 (NS).

It belongs to the ThiG family. In terms of assembly, homotetramer. Forms heterodimers with either ThiH or ThiS.

The protein localises to the cytoplasm. It carries out the reaction [ThiS sulfur-carrier protein]-C-terminal-Gly-aminoethanethioate + 2-iminoacetate + 1-deoxy-D-xylulose 5-phosphate = [ThiS sulfur-carrier protein]-C-terminal Gly-Gly + 2-[(2R,5Z)-2-carboxy-4-methylthiazol-5(2H)-ylidene]ethyl phosphate + 2 H2O + H(+). It participates in cofactor biosynthesis; thiamine diphosphate biosynthesis. Its function is as follows. Catalyzes the rearrangement of 1-deoxy-D-xylulose 5-phosphate (DXP) to produce the thiazole phosphate moiety of thiamine. Sulfur is provided by the thiocarboxylate moiety of the carrier protein ThiS. In vitro, sulfur can be provided by H(2)S. This is Thiazole synthase from Coxiella burnetii (strain CbuK_Q154) (Coxiella burnetii (strain Q154)).